Reading from the N-terminus, the 453-residue chain is 3-phosphoshikimate 1-carboxyvinyltransferase (453 aa).

Residues 1–25 (MSHDSEPQPVTAHPAGPLTGALKPP) form a disordered region. 3-phosphoshikimate-binding residues include K28, S29, and R33. Phosphoenolpyruvate is bound at residue K28. Phosphoenolpyruvate is bound by residues G101 and R129. 3-phosphoshikimate is bound by residues S175, Q177, D330, and K357. Q177 is a binding site for phosphoenolpyruvate. The active-site Proton acceptor is the D330. 2 residues coordinate phosphoenolpyruvate: R361 and R405.

Belongs to the EPSP synthase family. In terms of assembly, monomer.

It is found in the cytoplasm. It carries out the reaction 3-phosphoshikimate + phosphoenolpyruvate = 5-O-(1-carboxyvinyl)-3-phosphoshikimate + phosphate. It participates in metabolic intermediate biosynthesis; chorismate biosynthesis; chorismate from D-erythrose 4-phosphate and phosphoenolpyruvate: step 6/7. Functionally, catalyzes the transfer of the enolpyruvyl moiety of phosphoenolpyruvate (PEP) to the 5-hydroxyl of shikimate-3-phosphate (S3P) to produce enolpyruvyl shikimate-3-phosphate and inorganic phosphate. This chain is 3-phosphoshikimate 1-carboxyvinyltransferase, found in Methylorubrum populi (strain ATCC BAA-705 / NCIMB 13946 / BJ001) (Methylobacterium populi).